The primary structure comprises 340 residues: 4-hydroxy-3-methylbut-2-enyl diphosphate reductase (340 aa).

C21 contributes to the [4Fe-4S] cluster binding site. The (2E)-4-hydroxy-3-methylbut-2-enyl diphosphate site is built by H50 and H83. Residues H50 and H83 each contribute to the dimethylallyl diphosphate site. The isopentenyl diphosphate site is built by H50 and H83. C105 is a [4Fe-4S] cluster binding site. H133 lines the (2E)-4-hydroxy-3-methylbut-2-enyl diphosphate pocket. Position 133 (H133) interacts with dimethylallyl diphosphate. Position 133 (H133) interacts with isopentenyl diphosphate. Catalysis depends on E135, which acts as the Proton donor. T173 provides a ligand contact to (2E)-4-hydroxy-3-methylbut-2-enyl diphosphate. [4Fe-4S] cluster is bound at residue C203. (2E)-4-hydroxy-3-methylbut-2-enyl diphosphate is bound by residues S231, S232, N233, and S276. Residues S231, S232, N233, and S276 each contribute to the dimethylallyl diphosphate site. Residues S231, S232, N233, and S276 each coordinate isopentenyl diphosphate. A disordered region spans residues 320–340; it reads KARGEPLTRSATAGDRMNADR.

This sequence belongs to the IspH family. Requires [4Fe-4S] cluster as cofactor.

The catalysed reaction is isopentenyl diphosphate + 2 oxidized [2Fe-2S]-[ferredoxin] + H2O = (2E)-4-hydroxy-3-methylbut-2-enyl diphosphate + 2 reduced [2Fe-2S]-[ferredoxin] + 2 H(+). It catalyses the reaction dimethylallyl diphosphate + 2 oxidized [2Fe-2S]-[ferredoxin] + H2O = (2E)-4-hydroxy-3-methylbut-2-enyl diphosphate + 2 reduced [2Fe-2S]-[ferredoxin] + 2 H(+). It participates in isoprenoid biosynthesis; dimethylallyl diphosphate biosynthesis; dimethylallyl diphosphate from (2E)-4-hydroxy-3-methylbutenyl diphosphate: step 1/1. The protein operates within isoprenoid biosynthesis; isopentenyl diphosphate biosynthesis via DXP pathway; isopentenyl diphosphate from 1-deoxy-D-xylulose 5-phosphate: step 6/6. Its function is as follows. Catalyzes the conversion of 1-hydroxy-2-methyl-2-(E)-butenyl 4-diphosphate (HMBPP) into a mixture of isopentenyl diphosphate (IPP) and dimethylallyl diphosphate (DMAPP). Acts in the terminal step of the DOXP/MEP pathway for isoprenoid precursor biosynthesis. The sequence is that of 4-hydroxy-3-methylbut-2-enyl diphosphate reductase from Acidothermus cellulolyticus (strain ATCC 43068 / DSM 8971 / 11B).